A 600-amino-acid chain; its full sequence is Na(+)/dicarboxylate cotransporter 3 (600 aa).

Residues 1–16 (MAALAALAKKVWSARR) are Cytoplasmic-facing. The helical transmembrane segment at 17–37 (LLVLLLVPLALLPILFALPPK) threads the bilayer. At 38 to 55 (EGRCLYVILLMAVYWCTE) the chain is on the extracellular side. A helical membrane pass occupies residues 56-76 (ALPLSVTALLPIILFPFMGIL). Residues 77 to 82 (PSSKVC) are Cytoplasmic-facing. The helical transmembrane segment at 83 to 103 (PQYFLDTNFLFLSGLIMASAI) threads the bilayer. The Extracellular portion of the chain corresponds to 104-137 (EERNLHRRIALKVLMLVGVQPARLILGMMVTTSF). The chain crosses the membrane as a helical span at residues 138–158 (LSMWLSNTASTAMMLPIASAI). Residues 159-229 (LKSLFGQRDT…KEEEHRRNIW (71 aa)) lie on the Cytoplasmic side of the membrane. A helical membrane pass occupies residues 230-250 (KGFLISIPYSASIGGTATLTG). At 251-278 (TAPNLILLGQLKSFFPQCDVVNFGSWFI) the chain is on the extracellular side. The helical transmembrane segment at 279–299 (FAFPLMLLFLLVGWLWISFLY) threads the bilayer. The Cytoplasmic segment spans residues 300–336 (GGMSWRGWRKKNSKLQDVAEDKAKAVIQEEFQNLGPI). A helical transmembrane segment spans residues 337–357 (KFAEQAVFILFCLFAILLFSR). Over 358–372 (DPKFIPGWASLFAPG) the chain is Extracellular. Residues 373-393 (FVSDAVTGVAIVTILFFFPSQ) form a helical membrane-spanning segment. The Cytoplasmic segment spans residues 394 to 422 (KPSLKWWFDFKAPNSETEPLLSWKKAQET). Residues 423–443 (VPWNIILLLGGGFAMAKGCEE) constitute an intramembrane region (helical). At 444–461 (SGLSAWIGGQLHPLEHVP) the chain is on the cytoplasmic side. A helical membrane pass occupies residues 462–482 (PLLAVLLITVVIAFFTEFASN). The Extracellular segment spans residues 483–505 (TATIIIFLPVLAELAIRLHVHPL). Residues 506–526 (YLMIPGTVSCSYAFMLPVSTP) traverse the membrane as a helical segment. Over 527 to 546 (PNSIAFSTGHLLVKDMVRTG) the chain is Cytoplasmic. Residues 547–567 (LLMNLMGVLLLSLAMNTWAQA) traverse the membrane as a helical segment. At 568–600 (IFQLGTFPDWANTHAANVTALPPALTNNTVQTL) the chain is on the extracellular side. N584 and N594 each carry an N-linked (GlcNAc...) asparagine glycan.

It belongs to the SLC13A/DASS transporter (TC 2.A.47) family. NADC subfamily. Highly expressed in proximal parts of straight tubules in the kidney. Detected in placenta, in brain, and in liver. Strongly expressed within the meningeal layers of supporting tissue that surround the brain and relatively weakly expressed throughout the cerebral cortex, hippocampus, and cerebellum.

It is found in the cell membrane. The enzyme catalyses succinate(out) + 3 Na(+)(out) = succinate(in) + 3 Na(+)(in). The catalysed reaction is 2-oxoglutarate(out) + 3 Na(+)(out) = 2-oxoglutarate(in) + 3 Na(+)(in). It catalyses the reaction N-acetyl-L-aspartate(out) + 3 Na(+)(out) = N-acetyl-L-aspartate(in) + 3 Na(+)(in). It carries out the reaction glutarate(out) + 3 Na(+)(out) = glutarate(in) + 3 Na(+)(in). The enzyme catalyses fumarate(out) + 3 Na(+)(out) = fumarate(in) + 3 Na(+)(in). The catalysed reaction is malate(out) + 3 Na(+)(out) = malate(in) + 3 Na(+)(in). It catalyses the reaction 2,2-dimethylsuccinate(out) + 3 Na(+)(out) = 2,2-dimethylsuccinate(in) + 3 Na(+)(in). It carries out the reaction 2,3-dimethylsuccinate(out) + 3 Na(+)(out) = 2,3-dimethylsuccinate(in) + 3 Na(+)(in). The enzyme catalyses itaconate(out) + 3 Na(+)(out) = itaconate(in) + 3 Na(+)(in). Li(+) decreases succinate transport in the presence of Na(+). Its function is as follows. High-affinity sodium-dicarboxylate cotransporter that accepts a range of substrates with 4-6 carbon atoms, such as the citric acid cycle intermediates succinate and alpha-ketoglutarate (2-oxoglutarate), as well as other compounds including N-acetyl-L-aspartate. Transports the dicarboxylate into the cell with a probable stoichiometry of 3 Na(+) for 1 divalent dicarboxylate, rendering the process electrogenic. Can transport citrate in a Na(+)-dependent manner, recognizing the divalent form of citrate rather than the trivalent form which is normally found in blood. Imports itaconate in hepatocytes leading to activation of TFEB-dependent lysosomal biogenesis involved in antibacterial innate immune response. The protein is Na(+)/dicarboxylate cotransporter 3 (Slc13a3) of Rattus norvegicus (Rat).